Reading from the N-terminus, the 92-residue chain is SPbeta prophage-derived uncharacterized protein YopY (92 aa).

This chain is SPbeta prophage-derived uncharacterized protein YopY (yopY), found in Bacillus subtilis (strain 168).